A 448-amino-acid chain; its full sequence is N-succinylarginine dihydrolase (448 aa).

Substrate is bound by residues Ala19–Ser28, Asn110, and His137–Arg138. Residue Glu174 is part of the active site. Arg216 is a substrate binding site. His252 is an active-site residue. Residues Asp254 and Asn366 each coordinate substrate. Residue Cys372 is the Nucleophile of the active site.

The protein belongs to the succinylarginine dihydrolase family. In terms of assembly, homodimer.

It catalyses the reaction N(2)-succinyl-L-arginine + 2 H2O + 2 H(+) = N(2)-succinyl-L-ornithine + 2 NH4(+) + CO2. It functions in the pathway amino-acid degradation; L-arginine degradation via AST pathway; L-glutamate and succinate from L-arginine: step 2/5. In terms of biological role, catalyzes the hydrolysis of N(2)-succinylarginine into N(2)-succinylornithine, ammonia and CO(2). This is N-succinylarginine dihydrolase from Legionella pneumophila (strain Paris).